Here is a 171-residue protein sequence, read N- to C-terminus: MKFALVLLGFCAFYLVNATGDLETELEASDLQELQEALDLIAETPLESLEAEELEEARKFKFPKINWGKLASKAKDVYKKGQKLAKNKNVKKALKYGKQLAENLAAGEVHEPGTPVGNNKCWAIGTRCTDDCDCCPEHHCHCPAKSWTFGLIPCSCQVTESDKVNKCPPAE.

The first 18 residues, 1-18 (MKFALVLLGFCAFYLVNA), serve as a signal peptide directing secretion. Residues 19 to 58 (TGDLETELEASDLQELQEALDLIAETPLESLEAEELEEAR) constitute a propeptide, removed in mature form. Positions 59 to 104 (KFKFPKINWGKLASKAKDVYKKGQKLAKNKNVKKALKYGKQLAENL) are linear cationic cytotoxin domain. The Oxytoxin-type inhibitor cystine knot (ICK) domain maps to 118–171 (NNKCWAIGTRCTDDCDCCPEHHCHCPAKSWTFGLIPCSCQVTESDKVNKCPPAE). 5 disulfides stabilise this stretch: Cys-121-Cys-135, Cys-128-Cys-140, Cys-132-Cys-167, Cys-134-Cys-156, and Cys-142-Cys-154.

Belongs to the spiderine family. Cationic/spiderine subfamily. As to expression, expressed by the venom gland.

It localises to the secreted. In terms of biological role, has antimicrobial, insecticidal, cytolytic and cytotoxic activity. This Oxyopes takobius (Lynx spider) protein is Spiderine-2b.